A 60-amino-acid chain; its full sequence is Beta-defensin 8 (60 aa).

The first 22 residues, 1–22 (MRIHYLLFTFLLVLLSPLAAFS), serve as a signal peptide directing secretion. The propeptide occupies 23-25 (QKI). Disulfide bonds link Cys31/Cys58, Cys38/Cys52, and Cys42/Cys59.

Belongs to the beta-defensin family. As to expression, most highly expressed in testis and heart.

The protein resides in the secreted. Its function is as follows. A synthetic peptide displays antimicrobial activities against S.aureus, P.aeruginosa, E.coli and B.cepacia. The antimicrobial activity against S.aureus, E.coli and B.cepacia is reduced in raised concentration of NaCl, but its action against P.aeruginosa is independent of NaCl concentration. The sequence is that of Beta-defensin 8 (Defb8) from Mus musculus (Mouse).